Reading from the N-terminus, the 738-residue chain is AP-4 complex subunit beta-1 (738 aa).

The segment at 534-600 (CSPKSDPSLG…NASFATSGHL (67 aa)) is hinge. Residues 601 to 738 (ISEENKEGAQ…VIGTVGDIKS (138 aa)) are ear; mediates interaction with TEPSIN.

This sequence belongs to the adaptor complexes large subunit family. As to quaternary structure, adaptor protein complex 4 (AP-4) is a heterotetramer composed of two large adaptins (epsilon-type subunit AP4E1 and beta-type subunit AP4B1), a medium adaptin (mu-type subunit AP4M1) and a small adaptin (sigma-type AP4S1). Interacts with TEPSIN; this interaction requires the presence of a functional AP-4 complex. Interacts with GRIA2; probably indirect it mediates the somatodendritic localization of GRIA2 in neurons.

The protein resides in the golgi apparatus. The protein localises to the trans-Golgi network membrane. In terms of biological role, component of the adaptor protein complex 4 (AP-4). Adaptor protein complexes are vesicle coat components involved both in vesicle formation and cargo selection. They control the vesicular transport of proteins in different trafficking pathways. AP-4 forms a non clathrin-associated coat on vesicles departing the trans-Golgi network (TGN) and may be involved in the targeting of proteins from the trans-Golgi network (TGN) to the endosomal-lysosomal system. It is also involved in protein sorting to the basolateral membrane in epithelial cells and the proper asymmetric localization of somatodendritic proteins in neurons. AP-4 is involved in the recognition and binding of tyrosine-based sorting signals found in the cytoplasmic part of cargos, but may also recognize other types of sorting signal. In Mus musculus (Mouse), this protein is AP-4 complex subunit beta-1.